Consider the following 256-residue polypeptide: Nuclear shuttle protein (256 aa).

A Bipartite nuclear localization signal motif is present at residues Y21–S42. The Nuclear localization signal signature appears at Q81–L96. The tract at residues E150–D187 is interaction with Arabidopsis thaliana NSI protein.

The protein belongs to the begomovirus nuclear shuttle protein family. In terms of assembly, binds to single-stranded and double-stranded viral DNA. Interacts with the host nuclear shuttle interacting (NSI) protein. This interaction may allow NSP to recruit NSI monomers to the viral genome and thus regulate nuclear export of viral genome by NSP.

The protein localises to the host nucleus. It is found in the host cytoplasm. Its subcellular location is the host cell membrane. In terms of biological role, binds to the genomic viral ssDNA, shuttles it into and out of the cell nucleus. Begomoviruses use 2 proteins to transport their DNA from cell to cell. The nuclear shuttle protein (NSP) shuttles it between nucleus and cytoplasm and the movement protein (MP) probably transports the DNA-NSP complex to the cell periphery and facilitates movement across the cell wall. The protein is Nuclear shuttle protein of Macroptilium lathyroides (Lima bean).